Here is a 303-residue protein sequence, read N- to C-terminus: Aquaporin-7 (303 aa).

At 1 to 21 the chain is on the cytoplasmic side; that stretch reads MAPRSVLETIQSVLQKNMVRE. Ser-5 carries the post-translational modification Phosphoserine. A helical transmembrane segment spans residues 22–39; that stretch reads FLAEFLSTYVMMVFGLGS. Topologically, residues 40–52 are extracellular; sequence VAHMVLGENSGSY. The helical transmembrane segment at 53–70 threads the bilayer; sequence LGVNLGFGFGVTMGVHVA. Residues 71-74 lie on the Cytoplasmic side of the membrane; sequence GGIS. The segment at residues 75-88 is an intramembrane region (discontinuously helical); that stretch reads GAHMNAAVTFTNCA. Residues 79–81 carry the NPA 1 motif; the sequence is NAA. At 89-96 the chain is on the cytoplasmic side; it reads LGRMTWKK. A helical membrane pass occupies residues 97-117; it reads FPVYVLGQFLGSFSAAATTYL. The Extracellular portion of the chain corresponds to 118 to 152; the sequence is IFYGAINHFAGGDLLVTGSKATANIFATYLPEYMT. A helical transmembrane segment spans residues 153–173; that stretch reads LWRGFLDEAFVTGMLQLCLFA. The Cytoplasmic segment spans residues 174–185; sequence ITDKKNSPALQG. The helical transmembrane segment at 186–202 threads the bilayer; that stretch reads TEPLVIGILVTVLGVSL. The Extracellular portion of the chain corresponds to 203–206; sequence GMNS. The segment at residues 207–220 is an intramembrane region (discontinuously helical); it reads GYAINPSRDLPPRL. Positions 211 to 213 match the NPA 2 motif; sequence NPS. Topologically, residues 221–238 are extracellular; the sequence is FTFIAGWGKQVFRAGNNW. Residues 239–260 traverse the membrane as a helical segment; the sequence is WWVPVVAPLLGAYLGGIVYLGL. The Cytoplasmic portion of the chain corresponds to 261-303; that stretch reads IHPSIPQDPQRLENFTARDQKVTASYKNAASANISGSVPLEHF.

Belongs to the MIP/aquaporin (TC 1.A.8) family. In terms of assembly, homotetramer; each monomer provides an independent glycerol/water pore. Two homotetramers on opposing membranes can dimerize, forming a cell-cell junction. Interacts with PLIN1. Phosphorylation by PKA could prevent the interaction with PLIN1. As to expression, detected in proximal tubules in kidney. Detected in the capillary network between muscle fibers in skeletal muscle and heart, and in spermatids and on spermatozoa tails in testis and epididymis. Detected in white and brown adipose tissue, especially on small blood vessels (at protein level). Detected in kidney and white adipose tissue.

Its subcellular location is the cell membrane. It is found in the cytoplasmic vesicle membrane. The protein localises to the lipid droplet. The enzyme catalyses glycerol(in) = glycerol(out). It carries out the reaction H2O(in) = H2O(out). It catalyses the reaction urea(in) = urea(out). Its activity is regulated as follows. Glycerol transport is regulated by pH, with the porin being permeable to glycerol at pH 7.4 but not at pH 5.5. Water permeability, however, is not influenced by pH. Aquaglyceroporins form homotetrameric transmembrane channels, with each monomer independently mediating glycerol and water transport across the plasma membrane along their osmotic gradient. Could also be permeable to urea. Mediates the efflux of glycerol, formed upon triglyceride hydrolysis, to avoid its accumulation in adipocytes and to make it available to other tissues. In the kidney, mediates the reabsorption of glycerol, preventing its loss in urine, again participating to energy homeostasis. In pancreatic beta cells, it also mediates the efflux of glycerol, regulating its intracellular levels. The chain is Aquaporin-7 from Mus musculus (Mouse).